A 203-amino-acid chain; its full sequence is Recombination protein RecR (203 aa).

A C4-type zinc finger spans residues 57-73; that stretch reads CQSCGTLKSNSLGCNNC. The Toprim domain maps to 81-175; sequence NKICVVEDIA…KVTKLAQGLP (95 aa).

The protein belongs to the RecR family.

Functionally, may play a role in DNA repair. It seems to be involved in an RecBC-independent recombinational process of DNA repair. It may act with RecF and RecO. This chain is Recombination protein RecR, found in Pelagibacter ubique (strain HTCC1062).